The chain runs to 337 residues: UDP-3-O-acylglucosamine N-acyltransferase 1 (337 aa).

The active-site Proton acceptor is the histidine 238.

This sequence belongs to the transferase hexapeptide repeat family. LpxD subfamily. In terms of assembly, homotrimer.

The catalysed reaction is a UDP-3-O-[(3R)-3-hydroxyacyl]-alpha-D-glucosamine + a (3R)-hydroxyacyl-[ACP] = a UDP-2-N,3-O-bis[(3R)-3-hydroxyacyl]-alpha-D-glucosamine + holo-[ACP] + H(+). Its pathway is bacterial outer membrane biogenesis; LPS lipid A biosynthesis. Catalyzes the N-acylation of UDP-3-O-acylglucosamine using 3-hydroxyacyl-ACP as the acyl donor. Is involved in the biosynthesis of lipid A, a phosphorylated glycolipid that anchors the lipopolysaccharide to the outer membrane of the cell. The polypeptide is UDP-3-O-acylglucosamine N-acyltransferase 1 (Koribacter versatilis (strain Ellin345)).